The primary structure comprises 121 residues: Small ribosomal subunit protein uS13 (121 aa).

The interval 91–121 (HRRGLPVRGQNSKNNARTRKGPRRTVANKKK) is disordered. Residues 106–121 (ARTRKGPRRTVANKKK) show a composition bias toward basic residues.

This sequence belongs to the universal ribosomal protein uS13 family. In terms of assembly, part of the 30S ribosomal subunit. Forms a loose heterodimer with protein S19. Forms two bridges to the 50S subunit in the 70S ribosome.

Located at the top of the head of the 30S subunit, it contacts several helices of the 16S rRNA. In the 70S ribosome it contacts the 23S rRNA (bridge B1a) and protein L5 of the 50S subunit (bridge B1b), connecting the 2 subunits; these bridges are implicated in subunit movement. Contacts the tRNAs in the A and P-sites. This Bacillus cereus (strain AH187) protein is Small ribosomal subunit protein uS13.